The primary structure comprises 202 residues: Small ribosomal subunit protein uS4 (202 aa).

One can recognise an S4 RNA-binding domain in the interval S91 to D168.

Belongs to the universal ribosomal protein uS4 family. Part of the 30S ribosomal subunit. Contacts protein S5. The interaction surface between S4 and S5 is involved in control of translational fidelity.

Its function is as follows. One of the primary rRNA binding proteins, it binds directly to 16S rRNA where it nucleates assembly of the body of the 30S subunit. Functionally, with S5 and S12 plays an important role in translational accuracy. This Ehrlichia canis (strain Jake) protein is Small ribosomal subunit protein uS4.